The primary structure comprises 442 residues: Trigger factor (442 aa).

One can recognise a PPIase FKBP-type domain in the interval 165–250 (DDTAQIDFEG…LHKILQKELP (86 aa)).

Belongs to the FKBP-type PPIase family. Tig subfamily.

It localises to the cytoplasm. It carries out the reaction [protein]-peptidylproline (omega=180) = [protein]-peptidylproline (omega=0). Functionally, involved in protein export. Acts as a chaperone by maintaining the newly synthesized protein in an open conformation. Functions as a peptidyl-prolyl cis-trans isomerase. The polypeptide is Trigger factor (Helicobacter hepaticus (strain ATCC 51449 / 3B1)).